We begin with the raw amino-acid sequence, 222 residues long: GTP cyclohydrolase 1 (222 aa).

The Zn(2+) site is built by C111, H114, and C182.

It belongs to the GTP cyclohydrolase I family. Toroid-shaped homodecamer, composed of two pentamers of five dimers.

It catalyses the reaction GTP + H2O = 7,8-dihydroneopterin 3'-triphosphate + formate + H(+). It participates in cofactor biosynthesis; 7,8-dihydroneopterin triphosphate biosynthesis; 7,8-dihydroneopterin triphosphate from GTP: step 1/1. This is GTP cyclohydrolase 1 from Citrobacter koseri (strain ATCC BAA-895 / CDC 4225-83 / SGSC4696).